The following is a 673-amino-acid chain: UvrABC system protein B (673 aa).

The 158-residue stretch at 26–183 (EGLEDGLAHQ…RRLAELQYTR (158 aa)) folds into the Helicase ATP-binding domain. 39-46 (GVTGSGKT) lines the ATP pocket. Residues 92–115 (YYDYYQPEAYVPSSDTFIEKDASV) carry the Beta-hairpin motif. The Helicase C-terminal domain maps to 431–597 (QVDDLLSEIR…GLNKKVVDIL (167 aa)). Positions 633-668 (QQKIHELEGQMMQHAQNLEFEEAAQIRDQLHQLREL) constitute a UVR domain.

The protein belongs to the UvrB family. As to quaternary structure, forms a heterotetramer with UvrA during the search for lesions. Interacts with UvrC in an incision complex.

Its subcellular location is the cytoplasm. In terms of biological role, the UvrABC repair system catalyzes the recognition and processing of DNA lesions. A damage recognition complex composed of 2 UvrA and 2 UvrB subunits scans DNA for abnormalities. Upon binding of the UvrA(2)B(2) complex to a putative damaged site, the DNA wraps around one UvrB monomer. DNA wrap is dependent on ATP binding by UvrB and probably causes local melting of the DNA helix, facilitating insertion of UvrB beta-hairpin between the DNA strands. Then UvrB probes one DNA strand for the presence of a lesion. If a lesion is found the UvrA subunits dissociate and the UvrB-DNA preincision complex is formed. This complex is subsequently bound by UvrC and the second UvrB is released. If no lesion is found, the DNA wraps around the other UvrB subunit that will check the other stand for damage. This Salmonella heidelberg (strain SL476) protein is UvrABC system protein B.